Here is a 197-residue protein sequence, read N- to C-terminus: Large ribosomal subunit protein bL9 (197 aa).

The segment at 178-197 (GEFFDPEAQEDEAAAGETAQ) is disordered. Over residues 181–191 (FDPEAQEDEAA) the composition is skewed to acidic residues.

The protein belongs to the bacterial ribosomal protein bL9 family.

Binds to the 23S rRNA. This is Large ribosomal subunit protein bL9 from Bradyrhizobium sp. (strain BTAi1 / ATCC BAA-1182).